Consider the following 210-residue polypeptide: NADH dehydrogenase [ubiquinone] iron-sulfur protein 8, mitochondrial (210 aa).

A mitochondrion-targeting transit peptide spans 1–34 (MRCLTTPMLLRALAQAARAGPPGGRSLHSSAVAA). 4Fe-4S ferredoxin-type domains are found at residues 102-131 (RRYPSGEERCIACKLCEAICPAQAITIEAE) and 141-170 (TRYDIDMTKCIYCGFCQEACPVDAIVEGPN). Residues cysteine 111, cysteine 114, cysteine 117, cysteine 121, cysteine 150, cysteine 153, cysteine 156, and cysteine 160 each contribute to the [4Fe-4S] cluster site.

This sequence belongs to the complex I 23 kDa subunit family. As to quaternary structure, core subunit of respiratory chain NADH dehydrogenase (Complex I) which is composed of 45 different subunits. This is a component of the iron-sulfur (IP) fragment of the enzyme. Interacts with RAB5IF. [4Fe-4S] cluster is required as a cofactor. Expressed in all tissues with the highest level in heart and skeletal muscle and the lowest level in lung.

The protein resides in the mitochondrion inner membrane. It carries out the reaction a ubiquinone + NADH + 5 H(+)(in) = a ubiquinol + NAD(+) + 4 H(+)(out). Core subunit of the mitochondrial membrane respiratory chain NADH dehydrogenase (Complex I) which catalyzes electron transfer from NADH through the respiratory chain, using ubiquinone as an electron acceptor. Essential for the catalytic activity and assembly of complex I. The polypeptide is NADH dehydrogenase [ubiquinone] iron-sulfur protein 8, mitochondrial (NDUFS8) (Homo sapiens (Human)).